A 754-amino-acid polypeptide reads, in one-letter code: Ribonucleoside-diphosphate reductase subunit alpha (754 aa).

One can recognise an ATP-cone domain in the interval 4-93 (INVIKSSGVS…MFALRKHVYG (90 aa)). Substrate-binding positions include Thr-206, 221 to 222 (SC), Gly-250, 435 to 439 (NLCCE), and 615 to 619 (PCESS). A disulfide bridge connects residues Cys-222 and Cys-457. Residue Asn-435 is the Proton acceptor of the active site. The active-site Cysteine radical intermediate is Cys-437. Glu-439 (proton acceptor) is an active-site residue. Positions 621–641 (QVSNSTNGYEPPRGPVSVKES) are disordered.

The protein belongs to the ribonucleoside diphosphate reductase large chain family. In terms of assembly, heterodimer of a large and a small subunit.

It catalyses the reaction a 2'-deoxyribonucleoside 5'-diphosphate + [thioredoxin]-disulfide + H2O = a ribonucleoside 5'-diphosphate + [thioredoxin]-dithiol. Its activity is regulated as follows. Under complex allosteric control mediated by deoxynucleoside triphosphates and ATP binding. The type of nucleotide bound at the specificity site determines substrate preference. It seems probable that ATP makes the enzyme reduce CDP and UDP, dGTP favors ADP reduction and dTTP favors GDP reduction. Provides the precursors necessary for DNA synthesis. Catalyzes the biosynthesis of deoxyribonucleotides from the corresponding ribonucleotides. The chain is Ribonucleoside-diphosphate reductase subunit alpha (NRDA) from Escherichia coli (Bacteriophage T4).